The following is a 361-amino-acid chain: Nicotinate-nucleotide--dimethylbenzimidazole phosphoribosyltransferase (361 aa).

The active-site Proton acceptor is glutamate 315.

It belongs to the CobT family.

The enzyme catalyses 5,6-dimethylbenzimidazole + nicotinate beta-D-ribonucleotide = alpha-ribazole 5'-phosphate + nicotinate + H(+). The protein operates within nucleoside biosynthesis; alpha-ribazole biosynthesis; alpha-ribazole from 5,6-dimethylbenzimidazole: step 1/2. Functionally, catalyzes the synthesis of alpha-ribazole-5'-phosphate from nicotinate mononucleotide (NAMN) and 5,6-dimethylbenzimidazole (DMB). The polypeptide is Nicotinate-nucleotide--dimethylbenzimidazole phosphoribosyltransferase (Clostridium perfringens (strain 13 / Type A)).